We begin with the raw amino-acid sequence, 442 residues long: tRNA modification GTPase MnmE (442 aa).

(6S)-5-formyl-5,6,7,8-tetrahydrofolate is bound by residues Arg-22, Glu-79, and Lys-119. The TrmE-type G domain occupies 216–366 (GIKTCLVGAP…LLEKIKSIFA (151 aa)). Asn-226 is a K(+) binding site. Residues 226–231 (NSGKSS), 245–251 (SEIPGTT), and 270–273 (DTAG) contribute to the GTP site. Ser-230 is a Mg(2+) binding site. Ser-245, Ile-247, and Thr-250 together coordinate K(+). Thr-251 serves as a coordination point for Mg(2+). Lys-442 contacts (6S)-5-formyl-5,6,7,8-tetrahydrofolate.

Belongs to the TRAFAC class TrmE-Era-EngA-EngB-Septin-like GTPase superfamily. TrmE GTPase family. Homodimer. Heterotetramer of two MnmE and two MnmG subunits. K(+) serves as cofactor.

The protein localises to the cytoplasm. Exhibits a very high intrinsic GTPase hydrolysis rate. Involved in the addition of a carboxymethylaminomethyl (cmnm) group at the wobble position (U34) of certain tRNAs, forming tRNA-cmnm(5)s(2)U34. In Mesomycoplasma hyopneumoniae (strain 7448) (Mycoplasma hyopneumoniae), this protein is tRNA modification GTPase MnmE.